Reading from the N-terminus, the 470-residue chain is MNPNQKIITIGSVSLGLVVLNILLHIVSITITVLVLPGNGNSGNCNETIIREYNETVRIEKVTQRHNTNVIEYIERPESDHFMNNTEPLCDAKGFAPFSKDNGIRIGSRGHIFVIREPFVSCSPTECRTFFLTQGSLLNDKHSNGTVKDRSPYRTLMSVEIGQSPNVYQARFEAVAWSATACHDGKKWMTIGVTGPDAKAVAVVHYGGIPTDVINSWAGNILRTQESSCTCIQGECYWVMTDGPANRQAQYRVFKAKQGKIIGQTEISFNGGHIEECSCYPNEGKVECVCRDNWTGTNRPVLVISSDLSYRVGYLCAGLPSDTPRGEDSQFTGSCTSPMGNQGYGVKGFGFRQGNDVWMGRTISRTSRSGFEILKIRNGWTQNSKEQIKKQVVVDNLNWSGYSGSFTLPVELTKRNCLVPCFWVEMIRGKPEEKTIWTSSSSIVMCGVEHEIADWSWHDGAILPFDIDKM.

Residues 1 to 14 lie on the Intravirion side of the membrane; it reads MNPNQKIITIGSVS. Positions 11–32 are involved in apical transport and lipid raft association; sequence GSVSLGLVVLNILLHIVSITIT. The helical transmembrane segment at 15 to 35 threads the bilayer; that stretch reads LGLVVLNILLHIVSITITVLV. Residues 32 to 86 are hypervariable stalk region; the sequence is TVLVLPGNGNSGNCNETIIREYNETVRIEKVTQRHNTNVIEYIERPESDHFMNNT. Over 36 to 470 the chain is Virion surface; it reads LPGNGNSGNC…AILPFDIDKM (435 aa). N-linked (GlcNAc...) asparagine; by host glycosylation is found at asparagine 46, asparagine 54, and asparagine 84. Positions 89-470 are head of neuraminidase; sequence LCDAKGFAPF…AILPFDIDKM (382 aa). Cystine bridges form between cysteine 90–cysteine 417, cysteine 122–cysteine 127, cysteine 182–cysteine 229, cysteine 231–cysteine 236, cysteine 277–cysteine 290, cysteine 279–cysteine 288, cysteine 316–cysteine 335, and cysteine 421–cysteine 446. A substrate-binding site is contributed by arginine 116. Asparagine 144 carries N-linked (GlcNAc...) asparagine; by host glycosylation. Catalysis depends on aspartate 149, which acts as the Proton donor/acceptor. Arginine 150 provides a ligand contact to substrate. 275–276 provides a ligand contact to substrate; sequence EE. Arginine 291 contacts substrate. Residue aspartate 292 participates in Ca(2+) binding. Asparagine 293 carries N-linked (GlcNAc...) asparagine; by host glycosylation. Ca(2+) is bound by residues glycine 296 and aspartate 322. Arginine 368 is a binding site for substrate. N-linked (GlcNAc...) asparagine; by host glycosylation is present at asparagine 398. Tyrosine 402 acts as the Nucleophile in catalysis.

Belongs to the glycosyl hydrolase 34 family. As to quaternary structure, homotetramer. Requires Ca(2+) as cofactor. N-glycosylated.

It is found in the virion membrane. The protein resides in the host apical cell membrane. The enzyme catalyses Hydrolysis of alpha-(2-&gt;3)-, alpha-(2-&gt;6)-, alpha-(2-&gt;8)- glycosidic linkages of terminal sialic acid residues in oligosaccharides, glycoproteins, glycolipids, colominic acid and synthetic substrates.. With respect to regulation, inhibited by the neuraminidase inhibitors zanamivir (Relenza) and oseltamivir (Tamiflu). These drugs interfere with the release of progeny virus from infected cells and are effective against all influenza strains. Resistance to neuraminidase inhibitors is quite rare. Catalyzes the removal of terminal sialic acid residues from viral and cellular glycoconjugates. Cleaves off the terminal sialic acids on the glycosylated HA during virus budding to facilitate virus release. Additionally helps virus spread through the circulation by further removing sialic acids from the cell surface. These cleavages prevent self-aggregation and ensure the efficient spread of the progeny virus from cell to cell. Otherwise, infection would be limited to one round of replication. Described as a receptor-destroying enzyme because it cleaves a terminal sialic acid from the cellular receptors. May facilitate viral invasion of the upper airways by cleaving the sialic acid moieties on the mucin of the airway epithelial cells. Likely to plays a role in the budding process through its association with lipid rafts during intracellular transport. May additionally display a raft-association independent effect on budding. Plays a role in the determination of host range restriction on replication and virulence. Sialidase activity in late endosome/lysosome traffic seems to enhance virus replication. This is Neuraminidase from Influenza A virus (strain A/Turkey/Minnesota/501/1978 H6N8).